A 237-amino-acid chain; its full sequence is Phosphoribosylaminoimidazole-succinocarboxamide synthase (237 aa).

Belongs to the SAICAR synthetase family.

The catalysed reaction is 5-amino-1-(5-phospho-D-ribosyl)imidazole-4-carboxylate + L-aspartate + ATP = (2S)-2-[5-amino-1-(5-phospho-beta-D-ribosyl)imidazole-4-carboxamido]succinate + ADP + phosphate + 2 H(+). The protein operates within purine metabolism; IMP biosynthesis via de novo pathway; 5-amino-1-(5-phospho-D-ribosyl)imidazole-4-carboxamide from 5-amino-1-(5-phospho-D-ribosyl)imidazole-4-carboxylate: step 1/2. This Fusobacterium nucleatum subsp. nucleatum (strain ATCC 25586 / DSM 15643 / BCRC 10681 / CIP 101130 / JCM 8532 / KCTC 2640 / LMG 13131 / VPI 4355) protein is Phosphoribosylaminoimidazole-succinocarboxamide synthase.